The primary structure comprises 285 residues: 1-acyl-sn-glycerol-3-phosphate acyltransferase alpha (285 aa).

An N-terminal signal peptide occupies residues 1-28 (MELWPGAWTALLLLLLLLLSTLWFCSSS). The Lumenal portion of the chain corresponds to 29 to 34 (AKYFFK). Residues 35-55 (MAFYNGWILFLAILAIPVCAV) form a helical membrane-spanning segment. The Cytoplasmic portion of the chain corresponds to 56–124 (RGRNVENMKI…PDRCVPIAKR (69 aa)). Residues 101 to 106 (HQSSLD) carry the HXXXXD motif motif. A helical transmembrane segment spans residues 125–145 (ELLWAGSAGLACWLAGIIFID). Residues 146 to 189 (RKRTGDAISVMSEVAQTLLTQDVRVWVFPEGTRNHNGSMLPFKR) are Lumenal-facing. The short motif at 175-178 (EGTR) is the EGTR motif element.

This sequence belongs to the 1-acyl-sn-glycerol-3-phosphate acyltransferase family. In terms of tissue distribution, widely expressed.

The protein localises to the endoplasmic reticulum membrane. It catalyses the reaction a 1-acyl-sn-glycero-3-phosphate + an acyl-CoA = a 1,2-diacyl-sn-glycero-3-phosphate + CoA. It carries out the reaction 1-(9Z-octadecenoyl)-sn-glycero-3-phosphate + (9Z)-octadecenoyl-CoA = 1,2-di-(9Z-octadecenoyl)-sn-glycero-3-phosphate + CoA. The enzyme catalyses 1-(9Z-octadecenoyl)-sn-glycero-3-phosphate + hexadecanoyl-CoA = 1-(9Z)-octadecenoyl-2-hexadecanoyl-sn-glycero-3-phosphate + CoA. The catalysed reaction is heptadecanoyl-CoA + 1-(9Z-octadecenoyl)-sn-glycero-3-phosphate = 1-(9Z)-octadecenoyl-2-heptadecanoyl-sn-glycero-3-phosphate + CoA. It catalyses the reaction 1-(9Z-octadecenoyl)-sn-glycero-3-phosphate + octadecanoyl-CoA = 1-(9Z-octadecenoyl)-2-octadecanoyl-sn-glycero-3-phosphate + CoA. It carries out the reaction 1-(9Z-octadecenoyl)-sn-glycero-3-phosphate + (9Z,12Z)-octadecadienoyl-CoA = 1-(9Z)-octadecenoyl-2-(9Z,12Z)-octadecadienoyl-sn-glycero-3-phosphate + CoA. The enzyme catalyses 1-(9Z-octadecenoyl)-sn-glycero-3-phosphate + tetradecanoyl-CoA = 1-(9Z)-octadecenoyl-2-tetradecanoyl-sn-glycero-3-phosphate + CoA. The catalysed reaction is pentadecanoyl-CoA + 1-(9Z-octadecenoyl)-sn-glycero-3-phosphate = 1-(9Z)-octadecenoyl-2-pentadecanoyl-sn-glycero-3-phosphate + CoA. It catalyses the reaction 1-hexadecanoyl-sn-glycero-3-phosphate + (9Z)-octadecenoyl-CoA = 1-hexadecanoyl-2-(9Z-octadecenoyl)-sn-glycero-3-phosphate + CoA. It carries out the reaction 1-(9Z,12Z,15Z)-octadecatrienoyl-sn-glycero-3-phosphate + (9Z)-octadecenoyl-CoA = 1-(9Z,12Z,15Z)-octadecatrienoyl-2-(9Z)-octadecenoyl-sn-glycero-3-phosphate + CoA. The enzyme catalyses 1-(6Z,9Z,12Z-octadecatrienoyl)-sn-glycero-3-phosphate + (9Z)-octadecenoyl-CoA = (6Z,9Z,12Z)-octadecatrienoyl-2-(9Z)-octadecenoyl-sn-glycero-3-phosphate + CoA. The catalysed reaction is 1-eicosanoyl-sn-glycero-3-phosphate + (9Z)-octadecenoyl-CoA = 1-eicosanoyl-2-(9Z)-octadecenoyl-sn-glycero-3-phosphate + CoA. It catalyses the reaction 1-tetradecanoyl-sn-glycerol 3-phosphate + (9Z)-octadecenoyl-CoA = 1-tetradecanoyl-2-(9Z)-octadecenoyl-sn-glycero-3-phosphate + CoA. It carries out the reaction 1-(9Z-octadecenoyl)-sn-glycero-3-phosphate + (5Z,8Z,11Z,14Z)-eicosatetraenoyl-CoA = 1-(9Z)-octadecenoyl-2-(5Z,8Z,11Z,14Z)-eicosatetraenoyl-sn-glycero-3-phosphate + CoA. The enzyme catalyses 1-(9Z-octadecenoyl)-sn-glycero-3-phosphate + dodecanoyl-CoA = 1-(9Z)-octadecenoyl-2-dodecanoyl-sn-glycero-3-phosphate + CoA. The catalysed reaction is (6Z)-octadecenoyl-CoA + 1-(9Z-octadecenoyl)-sn-glycero-3-phosphate = 1-(9Z)-octadecenoyl-2-(6Z)-octadecenoyl-sn-glycero-3-phosphate + CoA. It catalyses the reaction (11Z)-octadecenoyl-CoA + 1-(9Z-octadecenoyl)-sn-glycero-3-phosphate = 1-(9Z)-octadecenoyl-2-(11Z)-octadecenoyl-sn-glycero-3-phosphate + CoA. It carries out the reaction (9Z)-hexadecenoyl-CoA + 1-(9Z-octadecenoyl)-sn-glycero-3-phosphate = 1-(9Z-octadecenoyl)-2-(9Z-hexadecenoyl)-sn-glycero-3-phosphate + CoA. It participates in phospholipid metabolism; CDP-diacylglycerol biosynthesis; CDP-diacylglycerol from sn-glycerol 3-phosphate: step 2/3. Functionally, converts 1-acyl-sn-glycerol-3-phosphate (lysophosphatidic acid or LPA) into 1,2-diacyl-sn-glycerol-3-phosphate (phosphatidic acid or PA) by incorporating an acyl moiety at the sn-2 position of the glycerol backbone. This is 1-acyl-sn-glycerol-3-phosphate acyltransferase alpha (Agpat1) from Mus musculus (Mouse).